A 362-amino-acid polypeptide reads, in one-letter code: 3-dehydroquinate synthase (362 aa).

NAD(+) is bound by residues 73–78 (DAEAGK), 107–111 (GAATD), 131–132 (TT), K144, K153, and 171–174 (TLQT). Zn(2+)-binding residues include E186, H249, and H265.

Belongs to the sugar phosphate cyclases superfamily. Dehydroquinate synthase family. It depends on NAD(+) as a cofactor. Co(2+) is required as a cofactor. The cofactor is Zn(2+).

Its subcellular location is the cytoplasm. It catalyses the reaction 7-phospho-2-dehydro-3-deoxy-D-arabino-heptonate = 3-dehydroquinate + phosphate. It participates in metabolic intermediate biosynthesis; chorismate biosynthesis; chorismate from D-erythrose 4-phosphate and phosphoenolpyruvate: step 2/7. Functionally, catalyzes the conversion of 3-deoxy-D-arabino-heptulosonate 7-phosphate (DAHP) to dehydroquinate (DHQ). This chain is 3-dehydroquinate synthase, found in Mycobacterium bovis (strain ATCC BAA-935 / AF2122/97).